Here is a 328-residue protein sequence, read N- to C-terminus: tRNA uridine(34) hydroxylase (328 aa).

In terms of domain architecture, Rhodanese spans 130 to 224 (LDEDTVVLDT…YGKDPEVQGE (95 aa)). The active-site Cysteine persulfide intermediate is C184.

This sequence belongs to the TrhO family.

It carries out the reaction uridine(34) in tRNA + AH2 + O2 = 5-hydroxyuridine(34) in tRNA + A + H2O. Functionally, catalyzes oxygen-dependent 5-hydroxyuridine (ho5U) modification at position 34 in tRNAs. The sequence is that of tRNA uridine(34) hydroxylase from Streptococcus gordonii (strain Challis / ATCC 35105 / BCRC 15272 / CH1 / DL1 / V288).